A 39-amino-acid polypeptide reads, in one-letter code: Photosystem II reaction center protein J (39 aa).

Residues 9-29 (LWIIATFGGIAALTVVGLFIY) traverse the membrane as a helical segment.

The protein belongs to the PsbJ family. In terms of assembly, PSII is composed of 1 copy each of membrane proteins PsbA, PsbB, PsbC, PsbD, PsbE, PsbF, PsbH, PsbI, PsbJ, PsbK, PsbL, PsbM, PsbT, PsbX, PsbY, PsbZ, Psb30/Ycf12, at least 3 peripheral proteins of the oxygen-evolving complex and a large number of cofactors. It forms dimeric complexes.

It localises to the plastid. The protein localises to the chloroplast thylakoid membrane. One of the components of the core complex of photosystem II (PSII). PSII is a light-driven water:plastoquinone oxidoreductase that uses light energy to abstract electrons from H(2)O, generating O(2) and a proton gradient subsequently used for ATP formation. It consists of a core antenna complex that captures photons, and an electron transfer chain that converts photonic excitation into a charge separation. In Guillardia theta (Cryptophyte), this protein is Photosystem II reaction center protein J.